Consider the following 165-residue polypeptide: Phosphopantetheine adenylyltransferase (165 aa).

The protein belongs to the eukaryotic CoaD family.

The protein resides in the cytoplasm. The catalysed reaction is (R)-4'-phosphopantetheine + ATP + H(+) = 3'-dephospho-CoA + diphosphate. Its pathway is cofactor biosynthesis; coenzyme A biosynthesis. Reversibly transfers an adenylyl group from ATP to 4'-phosphopantetheine, yielding dephospho-CoA (dPCoA) and pyrophosphate. The chain is Phosphopantetheine adenylyltransferase from Thermococcus kodakarensis (strain ATCC BAA-918 / JCM 12380 / KOD1) (Pyrococcus kodakaraensis (strain KOD1)).